The primary structure comprises 191 residues: Peptidyl-tRNA hydrolase (191 aa).

Tyr-14 is a binding site for tRNA. His-19 acts as the Proton acceptor in catalysis. The tRNA site is built by Tyr-64, Asn-66, and Asn-112.

The protein belongs to the PTH family. As to quaternary structure, monomer.

It localises to the cytoplasm. It catalyses the reaction an N-acyl-L-alpha-aminoacyl-tRNA + H2O = an N-acyl-L-amino acid + a tRNA + H(+). Functionally, hydrolyzes ribosome-free peptidyl-tRNAs (with 1 or more amino acids incorporated), which drop off the ribosome during protein synthesis, or as a result of ribosome stalling. In terms of biological role, catalyzes the release of premature peptidyl moieties from peptidyl-tRNA molecules trapped in stalled 50S ribosomal subunits, and thus maintains levels of free tRNAs and 50S ribosomes. The sequence is that of Peptidyl-tRNA hydrolase from Lachnoclostridium phytofermentans (strain ATCC 700394 / DSM 18823 / ISDg) (Clostridium phytofermentans).